The sequence spans 406 residues: Bifunctional enzyme IspD/IspF (406 aa).

Positions 1–246 are 2-C-methyl-D-erythritol 4-phosphate cytidylyltransferase; the sequence is MLQMPSKQPI…KLSASLLPDV (246 aa). The tract at residues 247 to 406 is 2-C-methyl-D-erythritol 2,4-cyclodiphosphate synthase; that stretch reads RTGNGYDVHQ…ATVVYRGVKR (160 aa). Positions 253 and 255 each coordinate a divalent metal cation. Residues 253 to 255 and 279 to 280 each bind 4-CDP-2-C-methyl-D-erythritol 2-phosphate; these read DVH and HS. Residue histidine 287 participates in a divalent metal cation binding. 4-CDP-2-C-methyl-D-erythritol 2-phosphate contacts are provided by residues 301 to 303, 377 to 380, phenylalanine 384, and arginine 387; these read DIG and TTNE.

This sequence in the N-terminal section; belongs to the IspD/TarI cytidylyltransferase family. IspD subfamily. In the C-terminal section; belongs to the IspF family. The cofactor is a divalent metal cation.

It catalyses the reaction 2-C-methyl-D-erythritol 4-phosphate + CTP + H(+) = 4-CDP-2-C-methyl-D-erythritol + diphosphate. The enzyme catalyses 4-CDP-2-C-methyl-D-erythritol 2-phosphate = 2-C-methyl-D-erythritol 2,4-cyclic diphosphate + CMP. The protein operates within isoprenoid biosynthesis; isopentenyl diphosphate biosynthesis via DXP pathway; isopentenyl diphosphate from 1-deoxy-D-xylulose 5-phosphate: step 2/6. It functions in the pathway isoprenoid biosynthesis; isopentenyl diphosphate biosynthesis via DXP pathway; isopentenyl diphosphate from 1-deoxy-D-xylulose 5-phosphate: step 4/6. Functionally, bifunctional enzyme that catalyzes the formation of 4-diphosphocytidyl-2-C-methyl-D-erythritol from CTP and 2-C-methyl-D-erythritol 4-phosphate (MEP) (IspD), and catalyzes the conversion of 4-diphosphocytidyl-2-C-methyl-D-erythritol 2-phosphate (CDP-ME2P) to 2-C-methyl-D-erythritol 2,4-cyclodiphosphate (ME-CPP) with a corresponding release of cytidine 5-monophosphate (CMP) (IspF). The polypeptide is Bifunctional enzyme IspD/IspF (Rhizobium leguminosarum bv. trifolii (strain WSM2304)).